The sequence spans 599 residues: UvrABC system protein C (599 aa).

Residues 18–96 form the GIY-YIG domain; that stretch reads QLPGVYKMLG…IKQHRPPYNI (79 aa). One can recognise a UVR domain in the interval 207–242; the sequence is KELNQELIAKMEQAAADLEFEKAVFYRDRLSLLREV.

The protein belongs to the UvrC family. As to quaternary structure, interacts with UvrB in an incision complex.

Its subcellular location is the cytoplasm. In terms of biological role, the UvrABC repair system catalyzes the recognition and processing of DNA lesions. UvrC both incises the 5' and 3' sides of the lesion. The N-terminal half is responsible for the 3' incision and the C-terminal half is responsible for the 5' incision. The protein is UvrABC system protein C of Acinetobacter baumannii (strain SDF).